The following is a 1396-amino-acid chain: DNA-directed RNA polymerase subunit beta' (1396 aa).

Zn(2+)-binding residues include cysteine 72, cysteine 74, cysteine 87, and cysteine 90. Residues aspartate 463, aspartate 465, and aspartate 467 each coordinate Mg(2+). Residues cysteine 814, cysteine 889, cysteine 896, and cysteine 899 each coordinate Zn(2+).

Belongs to the RNA polymerase beta' chain family. As to quaternary structure, the RNAP catalytic core consists of 2 alpha, 1 beta, 1 beta' and 1 omega subunit. When a sigma factor is associated with the core the holoenzyme is formed, which can initiate transcription. It depends on Mg(2+) as a cofactor. The cofactor is Zn(2+).

It catalyses the reaction RNA(n) + a ribonucleoside 5'-triphosphate = RNA(n+1) + diphosphate. In terms of biological role, DNA-dependent RNA polymerase catalyzes the transcription of DNA into RNA using the four ribonucleoside triphosphates as substrates. The chain is DNA-directed RNA polymerase subunit beta' from Chlamydia trachomatis serovar A (strain ATCC VR-571B / DSM 19440 / HAR-13).